A 177-amino-acid chain; its full sequence is R-phycoerythrin beta chain (177 aa).

2 residues coordinate phycourobilin: C50 and C61. An N4-methylasparagine modification is found at N72. Residues C82 and C158 each contribute to the (2R,3E)-phycoerythrobilin site.

This sequence belongs to the phycobiliprotein family. Heterodimer of an alpha and a beta chain. Post-translationally, contains two covalently linked phycoerythrobilin chromophores and one covalently linked phycourobilin chromophore.

Its subcellular location is the plastid. The protein resides in the chloroplast thylakoid membrane. Functionally, light-harvesting photosynthetic bile pigment-protein from the phycobiliprotein complex. The protein is R-phycoerythrin beta chain (cpeB) of Pyropia haitanensis (Red seaweed).